Here is a 1993-residue protein sequence, read N- to C-terminus: Otoferlin (1993 aa).

Residues 1 to 98 (MALIVHLKTV…VEENRVEVSD (98 aa)) enclose the C2 1 domain. Residues 1–1959 (MALIVHLKTV…IKYLICTRYK (1959 aa)) are Cytoplasmic-facing. The segment at 127–212 (PWDDGDFLGD…KEEPQRQDEP (86 aa)) is disordered. A compositionally biased stretch (acidic residues) spans 129–145 (DDGDFLGDESLQEEEKD). Basic and acidic residues-rich tracts occupy residues 163 to 186 (PGEK…EHKA) and 202 to 211 (HKEEPQRQDE). C2 domains follow at residues 251–372 (KRSK…HKWA) and 415–546 (IEGN…FLPT). The interval 654–708 (NYGNEVDGTSRPQRPRPRKEPGDEEEVDLIQNSSDDEGDEAGDLASVSSTPPMRP) is disordered. The span at 675–695 (GDEEEVDLIQNSSDDEGDEAG) shows a compositional bias: acidic residues. Positions 807 to 836 (RERLKSCMRELESMGQQAKSLRAQVKRHTV) form a coiled coil. C2 domains are found at residues 959–1084 (LHSF…PPRF) and 1131–1257 (RGPI…ANWN). Asp991, Asp997, Asp1053, Asp1055, and Asp1061 together coordinate Ca(2+). Disordered stretches follow at residues 1294–1318 (AEDE…EEPD) and 1339–1398 (LRQH…EKKK). Positions 1348–1357 (DLEEKEEMDS) are enriched in acidic residues. Residues 1366-1379 (KNKEKSRAAKEEKK) show a composition bias toward basic and acidic residues. C2 domains follow at residues 1460 to 1589 (LPED…ATCG) and 1710 to 1861 (DMPA…KQCT). Ca(2+) contacts are provided by Asp1504, Asp1510, Asp1559, Asp1561, Asp1567, Asp1832, Ser1835, and Asp1838. A helical transmembrane segment spans residues 1960-1980 (WLIIKIVLALLGLLMLALFLY). The Extracellular portion of the chain corresponds to 1981–1993 (SLPGYMVKKLLGA).

This sequence belongs to the ferlin family. In terms of assembly, interacts with SNAP25; the interaction is direct. Interacts with STX1; the interaction is direct. Interacts with RAB8B. Requires Ca(2+) as cofactor. Isoform 1 is expressed in the cochlea and brain. Expressed in cerebellum (Purkinje cells), hippocampus (granule cells of the dentate gyrus and in pyramidal cells of the CA1-CA3 region) and cortex (stellate and pyramidal cells). Expressed in hair cells of vestibular organs such as the saccule, utricle and crista ampullari. Expressed in the cochlear inner and outer cells (IHCs and OHCs) (at protein level). Expressed in brain: brainstem, cerebellum (granules cells and Purkinje cell layer), cortex (layers IV and V), inferior colliculus, superior colliculus and hippocampus (granule cells of the dentate gyrus and in pyramidal cells of the CA1-CA3 region).

The protein resides in the cytoplasmic vesicle. It is found in the secretory vesicle. The protein localises to the synaptic vesicle membrane. It localises to the basolateral cell membrane. Its subcellular location is the endoplasmic reticulum membrane. The protein resides in the golgi apparatus membrane. It is found in the presynaptic cell membrane. The protein localises to the cell membrane. Its function is as follows. Key calcium ion sensor involved in the Ca(2+)-triggered synaptic vesicle-plasma membrane fusion and in the control of neurotransmitter release at these output synapses. Interacts in a calcium-dependent manner to the presynaptic SNARE proteins at ribbon synapses of cochlear inner hair cells (IHCs) to trigger exocytosis of neurotransmitter. Also essential to synaptic exocytosis in immature outer hair cells (OHCs). May also play a role within the recycling of endosomes. This Rattus norvegicus (Rat) protein is Otoferlin (Otof).